Here is a 423-residue protein sequence, read N- to C-terminus: Hemoglobinase (423 aa).

Residues 1–18 form the signal peptide; sequence MFYSIFFIHILRIVLVDC. Residues 19-29 constitute a propeptide that is removed on maturation; sequence NEYSEENVDDR. Catalysis depends on residues histidine 145 and cysteine 186. Residues 286–307 form a disordered region; that stretch reads RKKASTEHDEPPMKPKDSIPSR. Residues 286–423 constitute a propeptide that is removed on maturation; sequence RKKASTEHDE…INGVIRKVCG (138 aa). Residues 289-305 are compositionally biased toward basic and acidic residues; sequence ASTEHDEPPMKPKDSIP.

It belongs to the peptidase C13 family. Gut.

It catalyses the reaction Hydrolysis of proteins and small molecule substrates at -Asn-|-Xaa- bonds.. This protease is used by the parasite for degradation of the host globin. In Schistosoma japonicum (Blood fluke), this protein is Hemoglobinase (HAEM).